The chain runs to 53 residues: Ferredoxin B (53 aa).

The N-terminal extension stretch occupies residues 1–35 (GIDPNYRSLPVVKEEQGVKIYGTYEPPTKLGIWGT). K29 bears the N6-methyllysine mark. In terms of domain architecture, 4Fe-4S ferredoxin-type 1 spans 34-53 (GTIVGVDFDLCIADGSCINA). C44 and C50 together coordinate [3Fe-4S] cluster.

It depends on [3Fe-4S] cluster as a cofactor. [4Fe-4S] cluster serves as cofactor.

In terms of biological role, ferredoxins are iron-sulfur proteins that transfer electrons in a wide variety of metabolic reactions. The polypeptide is Ferredoxin B (Sulfuracidifex metallicus (Sulfolobus metallicus)).